The following is a 133-amino-acid chain: Phosphoribosyl-AMP cyclohydrolase (133 aa).

Residue Asp-77 coordinates Mg(2+). A Zn(2+)-binding site is contributed by Cys-78. Mg(2+) contacts are provided by Asp-79 and Asp-81. Residues Cys-95 and Cys-102 each coordinate Zn(2+).

It belongs to the PRA-CH family. Homodimer. Mg(2+) is required as a cofactor. Zn(2+) serves as cofactor.

The protein localises to the cytoplasm. It catalyses the reaction 1-(5-phospho-beta-D-ribosyl)-5'-AMP + H2O = 1-(5-phospho-beta-D-ribosyl)-5-[(5-phospho-beta-D-ribosylamino)methylideneamino]imidazole-4-carboxamide. It participates in amino-acid biosynthesis; L-histidine biosynthesis; L-histidine from 5-phospho-alpha-D-ribose 1-diphosphate: step 3/9. Functionally, catalyzes the hydrolysis of the adenine ring of phosphoribosyl-AMP. In Azotobacter chroococcum mcd 1, this protein is Phosphoribosyl-AMP cyclohydrolase.